We begin with the raw amino-acid sequence, 186 residues long: Probable peptidoglycan L,D-endopeptidase MepK (186 aa).

The signal sequence occupies residues 1–30 (MNYVDQNKRKWLSLGGIALGISILPNSVLA). Residues H134, D141, and H174 each coordinate Zn(2+).

The protein belongs to the peptidase M15 family. Zn(2+) is required as a cofactor.

The protein operates within cell wall biogenesis; cell wall polysaccharide biosynthesis. Functionally, l,D-endopeptidase that cleaves meso-diaminopimelic acid (mDAP)-mDAP cross-links in peptidoglycan. It works in conjunction with other elongation-specific D,D-endopeptidases to make space for efficient incorporation of nascent peptidoglycan strands into the sacculus and thus enable cell wall expansion. This Haemophilus influenzae (strain ATCC 51907 / DSM 11121 / KW20 / Rd) protein is Probable peptidoglycan L,D-endopeptidase MepK.